The primary structure comprises 96 residues: Prokineticin Bv8-like peptide 2 (96 aa).

The N-terminal stretch at 1–19 is a signal peptide; sequence MKCFAQIVVLLLVIAFSHG. 5 disulfides stabilise this stretch: Cys-26-Cys-38, Cys-32-Cys-50, Cys-37-Cys-78, Cys-60-Cys-86, and Cys-80-Cys-95.

The protein belongs to the AVIT (prokineticin) family. Expressed by the skin glands.

The protein localises to the secreted. Its function is as follows. Potent agonist for both PKR1/PROKR1 and PKR2/PROKR2, and inducer of a potent and long-lasting hyperalgesia. Also potentiates capsaicin-induced TRPV1 current when tested on DRG neurons. At subnanomolar concentrations, this protein both induces potent chemotaxis of macrophages and stimulates LPS-induced production of the pro-inflammatory cytokines IL-1 and IL-12. In vivo, potently stimulates the contraction of the guinea-pig gastrointestinal (GI) smooth muscle (nanomolar concentration) and rabbit aortic rings. The protein is Prokineticin Bv8-like peptide 2 of Bombina maxima (Giant fire-bellied toad).